The following is a 155-amino-acid chain: uncharacterized protein (155 aa).

This is an uncharacterized protein from Saccharomyces cerevisiae (strain ATCC 204508 / S288c) (Baker's yeast).